The sequence spans 344 residues: Holliday junction branch migration complex subunit RuvB (344 aa).

Residues 4–194 (CLLRFCYNSL…FGITGHMEYY (191 aa)) are large ATPase domain (RuvB-L). Residues Leu-33, Arg-34, Gly-75, Lys-78, Thr-79, Thr-80, 141 to 143 (EDF), Arg-184, Tyr-194, and Arg-231 contribute to the ATP site. A Mg(2+)-binding site is contributed by Thr-79. Positions 195 to 265 (TDIDLTEIVE…ITDKALTMLD (71 aa)) are small ATPAse domain (RuvB-S). A head domain (RuvB-H) region spans residues 268–344 (HEGLDYVDQK…YEHLGYRYTE (77 aa)). The DNA site is built by Arg-304, Arg-323, Arg-325, and Arg-328.

Belongs to the RuvB family. Homohexamer. Forms an RuvA(8)-RuvB(12)-Holliday junction (HJ) complex. HJ DNA is sandwiched between 2 RuvA tetramers; dsDNA enters through RuvA and exits via RuvB. An RuvB hexamer assembles on each DNA strand where it exits the tetramer. Each RuvB hexamer is contacted by two RuvA subunits (via domain III) on 2 adjacent RuvB subunits; this complex drives branch migration. In the full resolvosome a probable DNA-RuvA(4)-RuvB(12)-RuvC(2) complex forms which resolves the HJ.

It localises to the cytoplasm. It carries out the reaction ATP + H2O = ADP + phosphate + H(+). In terms of biological role, the RuvA-RuvB-RuvC complex processes Holliday junction (HJ) DNA during genetic recombination and DNA repair, while the RuvA-RuvB complex plays an important role in the rescue of blocked DNA replication forks via replication fork reversal (RFR). RuvA specifically binds to HJ cruciform DNA, conferring on it an open structure. The RuvB hexamer acts as an ATP-dependent pump, pulling dsDNA into and through the RuvAB complex. RuvB forms 2 homohexamers on either side of HJ DNA bound by 1 or 2 RuvA tetramers; 4 subunits per hexamer contact DNA at a time. Coordinated motions by a converter formed by DNA-disengaged RuvB subunits stimulates ATP hydrolysis and nucleotide exchange. Immobilization of the converter enables RuvB to convert the ATP-contained energy into a lever motion, pulling 2 nucleotides of DNA out of the RuvA tetramer per ATP hydrolyzed, thus driving DNA branch migration. The RuvB motors rotate together with the DNA substrate, which together with the progressing nucleotide cycle form the mechanistic basis for DNA recombination by continuous HJ branch migration. Branch migration allows RuvC to scan DNA until it finds its consensus sequence, where it cleaves and resolves cruciform DNA. In Streptococcus mutans serotype c (strain ATCC 700610 / UA159), this protein is Holliday junction branch migration complex subunit RuvB.